The primary structure comprises 634 residues: Threonine--tRNA ligase (634 aa).

The TGS domain occupies 1–61 (MINIRFPDGS…NSNCELRLIT (61 aa)). A catalytic region spans residues 241 to 532 (DHRKIGKVLD…LIEHYAGNLP (292 aa)). Zn(2+) is bound by residues C332, H383, and H509.

The protein belongs to the class-II aminoacyl-tRNA synthetase family. Homodimer. It depends on Zn(2+) as a cofactor.

The protein resides in the cytoplasm. The enzyme catalyses tRNA(Thr) + L-threonine + ATP = L-threonyl-tRNA(Thr) + AMP + diphosphate + H(+). Catalyzes the attachment of threonine to tRNA(Thr) in a two-step reaction: L-threonine is first activated by ATP to form Thr-AMP and then transferred to the acceptor end of tRNA(Thr). Also edits incorrectly charged L-seryl-tRNA(Thr). This is Threonine--tRNA ligase from Francisella tularensis subsp. mediasiatica (strain FSC147).